Here is a 514-residue protein sequence, read N- to C-terminus: Synaptic vesicular amine transporter (514 aa).

The Cytoplasmic segment spans residues 1–20 (MALSELALVRWLQESRRSRK). A helical membrane pass occupies residues 21-41 (LILFIVFLALLLDNMLLTVVV). The Lumenal, vesicle segment spans residues 42–129 (PIIPSYLYSI…EDKDLLNENV (88 aa)). N-linked (GlcNAc...) asparagine glycosylation is found at asparagine 84 and asparagine 91. An intrachain disulfide couples cysteine 117 to cysteine 324. A helical transmembrane segment spans residues 130-150 (QVGLLFASKATVQLITNPFIG). The Cytoplasmic portion of the chain corresponds to 151-159 (LLTNRIGYP). A helical membrane pass occupies residues 160–180 (IPIFAGFCIMFVSTIMFAFSS). Over 181 to 189 (SYAFLLIAR) the chain is Lumenal, vesicle. Residues 190–210 (SLQGIGSSCSSVAGMGMLASV) traverse the membrane as a helical segment. Over 211-219 (YTDDEERGN) the chain is Cytoplasmic. The chain crosses the membrane as a helical span at residues 220-242 (VMGIALGGLAMGVLVGPPFGSVL). Serotonin contacts are provided by leucine 228 and valine 232. Residues 243–248 (YEFVGK) lie on the Lumenal, vesicle side of the membrane. The helical transmembrane segment at 249 to 271 (TAPFLVLAALVLLDGAIQLFVLQ) threads the bilayer. Residues 272–291 (PSRVQPESQKGTPLTTLLKD) are Cytoplasmic-facing. Residues 292 to 311 (PYILIAAGSICFANMGIAML) traverse the membrane as a helical segment. Serotonin-binding residues include asparagine 305, isoleucine 308, glutamate 312, phenylalanine 334, and tyrosine 341. The Lumenal, vesicle portion of the chain corresponds to 312–328 (EPALPIWMMETMCSRKW). The chain crosses the membrane as a helical span at residues 329 to 352 (QLGVAFLPASISYLIGTNIFGILA). The Cytoplasmic portion of the chain corresponds to 353-357 (HKMGR). Residues 358 to 378 (WLCALLGMIIVGVSILCIPFA) traverse the membrane as a helical segment. Topologically, residues 379–389 (KNIYGLIAPNF) are lumenal, vesicle. The helical transmembrane segment at 390–410 (GVGFAIGMVDSSMMPIMGYLV) threads the bilayer. Residue aspartate 399 coordinates serotonin. The Cytoplasmic portion of the chain corresponds to 411–414 (DLRH). Residues 415 to 435 (VSVYGSVYAIADVAFCMGYAI) traverse the membrane as a helical segment. Serotonin is bound at residue tyrosine 433. Over 436 to 440 (GPSAG) the chain is Lumenal, vesicle. The helical transmembrane segment at 441–462 (GAIAKAIGFPWLMTIIGIIDIL) threads the bilayer. Topologically, residues 463-514 (FAPLCFFLRSPPAKEEKMAILMDHNCPIKTKMYTQNNIQSYPIGEDEESESD) are cytoplasmic. 2 positions are modified to phosphoserine: serine 511 and serine 513.

The protein belongs to the major facilitator superfamily. Vesicular transporter family. As to quaternary structure, interacts with SLC6A3. Expressed in neuronal and neuroendocrine tissues. Detected in central and peripheral nervous system in particular in axonal and dendritic processes in dopaminergic cells of substantia nigra, histaminergic neuronal cell bodies of substantia nigra and tuberomammillary nucleus, in ganglion cells of sympathetic glia and in peripheral sympathetic nerve terminals in stomach and duodenum (at protein level). Highly expressed in chromaffin cells of the adrenal medulla and histamine-storing enterochromaffin-like cells of oxyntic mucosa (at protein level).

It localises to the cytoplasmic vesicle. It is found in the secretory vesicle. The protein resides in the synaptic vesicle membrane. Its subcellular location is the secretory vesicle membrane. The protein localises to the cell projection. It localises to the axon. It is found in the dendrite. It carries out the reaction serotonin(in) + 2 H(+)(out) = serotonin(out) + 2 H(+)(in). The catalysed reaction is dopamine(in) + 2 H(+)(out) = dopamine(out) + 2 H(+)(in). It catalyses the reaction histamine(in) + 2 H(+)(out) = histamine(out) + 2 H(+)(in). With respect to regulation, strongly inhibited by reserpine and tetrabenazine. Also inhibited to a lesser extent by ketanserin and fenfluramine. Reserpine and ketanserin inhibit by blocking the substrate-binding pocket. Tetrabenazine traps SLC18A2/VMAT2 in an occluded conformation and its inhibition is specific to SLC18A2/VMAT2 but not SLC18A1/VMAT1. Its function is as follows. Electrogenic antiporter that exchanges one cationic monoamine with two intravesicular protons across the membrane of secretory and synaptic vesicles. Uses the electrochemical proton gradient established by the V-type proton-pump ATPase to accumulate high concentrations of monoamines inside the vesicles prior to their release via exocytosis. Transports a variety of catecholamines such as dopamine, adrenaline and noradrenaline, histamine, and indolamines such as serotonin. Regulates the transvesicular monoaminergic gradient that determines the quantal size. Mediates somatodendritic dopamine release in hippocampal neurons, likely as part of a regulated secretory pathway that integrates retrograde synaptic signals. Acts as a primary transporter for striatal dopamine loading ensuring impulse-dependent release of dopamine at the synaptic cleft. Responsible for histamine and serotonin storage and subsequent corelease from mast cell granules. The protein is Synaptic vesicular amine transporter (SLC18A2) of Homo sapiens (Human).